The following is a 125-amino-acid chain: Probable 4-amino-4-deoxy-L-arabinose-phosphoundecaprenol flippase subunit ArnF (125 aa).

At 1–2 (MG) the chain is on the cytoplasmic side. The helical transmembrane segment at 3–23 (VMWGLISVAIASLAQLSLGFA) threads the bilayer. Residues 24–33 (MMRLPSIAHP) are Periplasmic-facing. Residues 34–54 (LAFISGLGALNAATLALFAGL) form a helical membrane-spanning segment. The Cytoplasmic portion of the chain corresponds to 55 to 76 (AGYLVSVFCWHKTLHTLALSKA). The helical transmembrane segment at 77–97 (YALLSLSYVLVWVASMLLPGL) threads the bilayer. Topologically, residues 98–100 (QGA) are periplasmic. The chain crosses the membrane as a helical span at residues 101-121 (FSLKAMLGVLCIMAGVMLIFL). Residues 122–125 (PARS) lie on the Cytoplasmic side of the membrane.

Belongs to the ArnF family. In terms of assembly, heterodimer of ArnE and ArnF.

It localises to the cell inner membrane. It participates in bacterial outer membrane biogenesis; lipopolysaccharide biosynthesis. Its function is as follows. Translocates 4-amino-4-deoxy-L-arabinose-phosphoundecaprenol (alpha-L-Ara4N-phosphoundecaprenol) from the cytoplasmic to the periplasmic side of the inner membrane. In Salmonella agona (strain SL483), this protein is Probable 4-amino-4-deoxy-L-arabinose-phosphoundecaprenol flippase subunit ArnF.